The primary structure comprises 710 residues: uncharacterized protein (710 aa).

Coiled coils occupy residues 273–298 (LYRQERKELKNTKQRYLKKKNEMEEG) and 477–528 (RYEK…VADT).

This is an uncharacterized protein from Coxiella burnetii (strain RSA 493 / Nine Mile phase I).